Here is a 391-residue protein sequence, read N- to C-terminus: Elongation factor Tu (391 aa).

In terms of domain architecture, tr-type G spans lysine 10–glutamate 201. Positions glycine 19 to threonine 26 are G1. GTP is bound at residue glycine 19 to threonine 26. Mg(2+) is bound at residue threonine 26. The interval glycine 55–serine 59 is G2. A G3 region spans residues aspartate 76 to glycine 79. GTP-binding positions include aspartate 76–histidine 80 and asparagine 131–aspartate 134. Residues asparagine 131–aspartate 134 are G4. The segment at serine 169–leucine 171 is G5.

It belongs to the TRAFAC class translation factor GTPase superfamily. Classic translation factor GTPase family. EF-Tu/EF-1A subfamily. Monomer.

The protein resides in the cytoplasm. The catalysed reaction is GTP + H2O = GDP + phosphate + H(+). Functionally, GTP hydrolase that promotes the GTP-dependent binding of aminoacyl-tRNA to the A-site of ribosomes during protein biosynthesis. This chain is Elongation factor Tu, found in Roseobacter denitrificans (strain ATCC 33942 / OCh 114) (Erythrobacter sp. (strain OCh 114)).